Consider the following 423-residue polypeptide: Serine--tRNA ligase (423 aa).

Thr-230–Glu-232 contacts L-serine. Arg-261–Glu-263 contributes to the ATP binding site. Glu-284 is an L-serine binding site. Glu-348–Ser-351 serves as a coordination point for ATP. Residue Ser-384 coordinates L-serine.

It belongs to the class-II aminoacyl-tRNA synthetase family. Type-1 seryl-tRNA synthetase subfamily. In terms of assembly, homodimer. The tRNA molecule binds across the dimer.

The protein localises to the cytoplasm. It carries out the reaction tRNA(Ser) + L-serine + ATP = L-seryl-tRNA(Ser) + AMP + diphosphate + H(+). It catalyses the reaction tRNA(Sec) + L-serine + ATP = L-seryl-tRNA(Sec) + AMP + diphosphate + H(+). The protein operates within aminoacyl-tRNA biosynthesis; selenocysteinyl-tRNA(Sec) biosynthesis; L-seryl-tRNA(Sec) from L-serine and tRNA(Sec): step 1/1. In terms of biological role, catalyzes the attachment of serine to tRNA(Ser). Is also able to aminoacylate tRNA(Sec) with serine, to form the misacylated tRNA L-seryl-tRNA(Sec), which will be further converted into selenocysteinyl-tRNA(Sec). The polypeptide is Serine--tRNA ligase (Acetivibrio thermocellus (strain ATCC 27405 / DSM 1237 / JCM 9322 / NBRC 103400 / NCIMB 10682 / NRRL B-4536 / VPI 7372) (Clostridium thermocellum)).